The primary structure comprises 454 residues: Apyrase (454 aa).

The Cytoplasmic portion of the chain corresponds to 1–7 (MLNQNSH). The helical; Signal-anchor for type II membrane protein transmembrane segment at 8 to 28 (FIFIILAIFLVLPLSLLSKNV) threads the bilayer. The Extracellular segment spans residues 29–454 (NAQIPLRRHL…TTNKIRVASS (426 aa)). 48–58 (VIFDAGSTGSR) is a binding site for ATP. A glycan (N-linked (GlcNAc...) asparagine) is linked at Asn151. Glu170 (proton acceptor) is an active-site residue. 194–204 (ATIDLGGGSVQ) provides a ligand contact to ATP. N-linked (GlcNAc...) asparagine glycosylation occurs at Asn262.

The protein belongs to the GDA1/CD39 NTPase family. The cofactor is Ca(2+). In terms of processing, the N-terminus is blocked.

The protein localises to the membrane. It catalyses the reaction a ribonucleoside 5'-triphosphate + 2 H2O = a ribonucleoside 5'-phosphate + 2 phosphate + 2 H(+). Catalyzes the hydrolysis of phosphoanhydride bonds of nucleoside tri- and di-phosphates. The polypeptide is Apyrase (RROP1) (Solanum tuberosum (Potato)).